The following is a 556-amino-acid chain: Dihydroxy-acid dehydratase (556 aa).

D78 is a binding site for Mg(2+). A [2Fe-2S] cluster-binding site is contributed by C119. Mg(2+)-binding residues include D120 and K121. K121 carries the N6-carboxylysine modification. C191 is a [2Fe-2S] cluster binding site. E442 contacts Mg(2+). S468 (proton acceptor) is an active-site residue.

The protein belongs to the IlvD/Edd family. In terms of assembly, homodimer. [2Fe-2S] cluster is required as a cofactor. Mg(2+) serves as cofactor.

The catalysed reaction is (2R)-2,3-dihydroxy-3-methylbutanoate = 3-methyl-2-oxobutanoate + H2O. It catalyses the reaction (2R,3R)-2,3-dihydroxy-3-methylpentanoate = (S)-3-methyl-2-oxopentanoate + H2O. Its pathway is amino-acid biosynthesis; L-isoleucine biosynthesis; L-isoleucine from 2-oxobutanoate: step 3/4. The protein operates within amino-acid biosynthesis; L-valine biosynthesis; L-valine from pyruvate: step 3/4. Functions in the biosynthesis of branched-chain amino acids. Catalyzes the dehydration of (2R,3R)-2,3-dihydroxy-3-methylpentanoate (2,3-dihydroxy-3-methylvalerate) into 2-oxo-3-methylpentanoate (2-oxo-3-methylvalerate) and of (2R)-2,3-dihydroxy-3-methylbutanoate (2,3-dihydroxyisovalerate) into 2-oxo-3-methylbutanoate (2-oxoisovalerate), the penultimate precursor to L-isoleucine and L-valine, respectively. This Clostridium beijerinckii (strain ATCC 51743 / NCIMB 8052) (Clostridium acetobutylicum) protein is Dihydroxy-acid dehydratase.